A 300-amino-acid polypeptide reads, in one-letter code: B1 kinase (300 aa).

The region spanning 16–282 (WVVGPLIGKG…ITMVNSLTYF (267 aa)) is the Protein kinase domain. ATP-binding positions include 22 to 30 (IGKGGFGSI) and Lys45. Asp147 functions as the Proton acceptor in the catalytic mechanism.

Belongs to the protein kinase superfamily. Ser/Thr protein kinase family. Poxviruses subfamily. In terms of assembly, interacts with host JIP1; this interaction increases the amount of MAPK bound to JIP1 and subsequently increases the activity of transcription factors, such as JUN, that respond to these complexes. Interacts with protein OPG198; this interaction inhibits the repressive activity of OPG198 pseudokinase on viral replication factory formation. Requires Mg(2+) as cofactor. In terms of processing, autophosphorylated.

The protein resides in the virion. Its subcellular location is the host cytoplasm. The catalysed reaction is L-seryl-[protein] + ATP = O-phospho-L-seryl-[protein] + ADP + H(+). The enzyme catalyses L-threonyl-[protein] + ATP = O-phospho-L-threonyl-[protein] + ADP + H(+). Its function is as follows. Essential serine/threonine-protein kinase that plays different role in the viral life cycle. Phosphorylates the host small ribosomal protein RACK1 thereby customizing the ribosomes to a state optimal for viral mRNAs (which contain poly-A leaders) but not for host mRNAs. Facilitates viral DNA replication by inhibiting host BANF1, a cellular host defense responsive to foreign DNA. Phosphorylates host BANF1 on serine and threonine residues; this leads to BANF1 relocalization to the cytoplasm, loss of dimerization and impaired DNA binding activity. Indeed, BANF1 activity depends on its DNA-binding property which is blocked by VPK1-mediated phosphorylation. Required for viral intermediate genes expression, probably by inhibiting host BANF1. Modulates cellular responses via host JUN by two different mechanisms, either by direct phosphorylation or by modulation of upstream JIP1-MAPK complexes. Seems to participate in the accumulation/processing of late proteins and thus in virion maturation. In addition, inhibits B12 repressive activity on viral DNA replication via a phosphorylation-dependent mechanism. The chain is B1 kinase (OPG187) from Bos taurus (Bovine).